The chain runs to 144 residues: Large ribosomal subunit protein uL15 (144 aa).

The interval 1-53 (MRLNTLSPAEGAKHAPKRLGRGIGSGLGKTGGRGHKGQNSRSGGGVRRGFEGG) is disordered. Residues 21–31 (RGIGSGLGKTG) are compositionally biased toward gly residues.

This sequence belongs to the universal ribosomal protein uL15 family. Part of the 50S ribosomal subunit.

In terms of biological role, binds to the 23S rRNA. The sequence is that of Large ribosomal subunit protein uL15 from Pectobacterium atrosepticum (strain SCRI 1043 / ATCC BAA-672) (Erwinia carotovora subsp. atroseptica).